Reading from the N-terminus, the 427-residue chain is Trigger factor (427 aa).

One can recognise a PPIase FKBP-type domain in the interval 160–240 (GDTLIGDVTK…VKEVKRLELP (81 aa)).

The protein belongs to the FKBP-type PPIase family. Tig subfamily.

It localises to the cytoplasm. It catalyses the reaction [protein]-peptidylproline (omega=180) = [protein]-peptidylproline (omega=0). In terms of biological role, involved in protein export. Acts as a chaperone by maintaining the newly synthesized protein in an open conformation. Functions as a peptidyl-prolyl cis-trans isomerase. This chain is Trigger factor, found in Chlorobaculum parvum (strain DSM 263 / NCIMB 8327) (Chlorobium vibrioforme subsp. thiosulfatophilum).